A 553-amino-acid chain; its full sequence is Zinc finger CCHC domain-containing protein 8 homolog (553 aa).

Residue S59 is modified to Phosphoserine. Residues 183-200 form a CCHC-type zinc finger; it reads SSCFNCGDTEHSLRDCTK. S292 and S347 each carry phosphoserine. The residue at position 356 (Y356) is a Phosphotyrosine. Positions 388–492 are disordered; the sequence is LEEETEDPPL…APSTPFKASY (105 aa). Pro residues predominate over residues 395–409; it reads PPLPPSVPPPQPPPP. Phosphoserine occurs at positions 421 and 423. Composition is skewed to polar residues over residues 444–456 and 473–485; these read ASHN…SKSP and ESGN…SAPS.

The protein belongs to the ZCCHC8 family.

Its subcellular location is the nucleus. The protein resides in the nucleoplasm. Its function is as follows. Scaffolding subunit of the trimeric nuclear exosome targeting (NEXT) complex, a complex that directs a subset of non-coding short-lived RNAs for exosomal degradation. The RNA exosome is fundamental for the degradation of RNA in eukaryotic nuclei. May be involved in pre-mRNA splicing. The sequence is that of Zinc finger CCHC domain-containing protein 8 homolog from Drosophila melanogaster (Fruit fly).